The following is a 451-amino-acid chain: MSTALSPLLAPMLSSAAMRAACDDRSTLQNMLDFEAALARAEAATGVIPAAAVGPIETACKAATFDIAALAEAATRSGNLAIPLVKALTANVAKADAEAARYVHWGATSQDVIDTATMLTLRAAIDALDADLSRAIKGFAALARNHRNTAMVARTWLQHALPMPFGLKAAEYAASLARARCRLRRLSRDGLALQFGGAAGTLAALGDKGLVVAERLAQELNLPLPEAPWHTHRDRIAEAASALAILAGSCGKIARDVSLMMQTDVAEAFEPAGEGRGGSSTMPHKRNPVAAASALGCATMAPQLAATIFAAQVQDHERSAGPWHAEWPTLPQLMLVTSGALAAIVDIAEGLDVDAARMRSNLDATHGLIMAEAVTFALAERIGKSDAHHLIEAASKRAVAEKKHLREVLAADSQVTAHLSPEKIAALFEPMAYQGASQAMIDRLLDSLERD.

Belongs to the class-II fumarase/aspartase family.

It catalyses the reaction 2-(carboxymethyl)-5-oxo-2,5-dihydro-2-furoate = 3-carboxy-cis,cis-muconate + H(+). In terms of biological role, catalyzes an anti cycloisomerization. This is 3-carboxy-cis,cis-muconate cycloisomerase (pcaB) from Bradyrhizobium diazoefficiens (strain JCM 10833 / BCRC 13528 / IAM 13628 / NBRC 14792 / USDA 110).